Consider the following 163-residue polypeptide: Peptidyl-prolyl cis-trans isomerase (163 aa).

The PPIase cyclophilin-type domain occupies 5–162 (YFDVSSNGKP…SVLKIEDCGT (158 aa)).

Belongs to the cyclophilin-type PPIase family. PPIase A subfamily.

It localises to the cytoplasm. The enzyme catalyses [protein]-peptidylproline (omega=180) = [protein]-peptidylproline (omega=0). Its activity is regulated as follows. Binds cyclosporin A (CsA). CsA mediates some of its effects via an inhibitory action on PPIase. PPIases accelerate the folding of proteins. It catalyzes the cis-trans isomerization of proline imidic peptide bonds in oligopeptides. The polypeptide is Peptidyl-prolyl cis-trans isomerase (PIG28) (Uromyces fabae (Rust fungus)).